The primary structure comprises 102 residues: Large ribosomal subunit protein bL21 (102 aa).

The protein belongs to the bacterial ribosomal protein bL21 family. Part of the 50S ribosomal subunit. Contacts protein L20.

Its function is as follows. This protein binds to 23S rRNA in the presence of protein L20. The polypeptide is Large ribosomal subunit protein bL21 (Limosilactobacillus fermentum (strain NBRC 3956 / LMG 18251) (Lactobacillus fermentum)).